We begin with the raw amino-acid sequence, 150 residues long: Protein Turandot X (150 aa).

An N-terminal signal peptide occupies residues 1–22 (MGLHIGSLLICVFLGILPFATA). The interval 127–150 (REEGQSNHANSPTTLPSRIQKMTK) is disordered. Over residues 132–150 (SNHANSPTTLPSRIQKMTK) the composition is skewed to polar residues.

Belongs to the Turandot family.

Its subcellular location is the secreted. A humoral factor that may play a role in stress tolerance. The chain is Protein Turandot X from Drosophila simulans (Fruit fly).